Reading from the N-terminus, the 27-residue chain is Delta-conotoxin TsVIA (27 aa).

3 disulfides stabilise this stretch: cysteine 1/cysteine 17, cysteine 8/cysteine 21, and cysteine 16/cysteine 25.

It belongs to the conotoxin O1 superfamily. Expressed by the venom duct.

It localises to the secreted. Its function is as follows. Delta-conotoxins bind to site 6 of voltage-gated sodium channels (Nav) and inhibit the inactivation process. This toxin inhibits tetrodotoxin(TTX)-sensitive sodium channels. A test on mouse Nav1.6/SCN8A confirms this sensitivity. The chain is Delta-conotoxin TsVIA from Conus tessulatus (Tessellate cone).